The primary structure comprises 455 residues: GTPase Der (455 aa).

EngA-type G domains lie at 4 to 169 and 178 to 355; these read PIVA…PKDQ and LRVS…GQHQ. GTP is bound by residues 10-17, 57-61, 120-123, 184-191, 233-237, and 298-301; these read GRPNVGKS, DTGGL, NKLE, DTAGI, and NKWD. Positions 356–441 constitute a KH-like domain; it reads RRVSTSVLNE…PVRFIFRGKP (86 aa).

This sequence belongs to the TRAFAC class TrmE-Era-EngA-EngB-Septin-like GTPase superfamily. EngA (Der) GTPase family. Associates with the 50S ribosomal subunit.

In terms of biological role, GTPase that plays an essential role in the late steps of ribosome biogenesis. The polypeptide is GTPase Der (Gloeobacter violaceus (strain ATCC 29082 / PCC 7421)).